Consider the following 731-residue polypeptide: DNA topoisomerase 1 (731 aa).

Residues 17–130 (KHLVIVESPA…KRIVFNEITP (114 aa)) enclose the Toprim domain. Residues Glu23 and Asp96 each contribute to the Mg(2+) site. In terms of domain architecture, Topo IA-type catalytic spans 144–569 (DTAKVNAQKA…DFYPAFSEKV (426 aa)). Residues 178–183 (SAGRVQ) form an interaction with DNA region. Tyr312 (O-(5'-phospho-DNA)-tyrosine intermediate) is an active-site residue. C4-type zinc fingers lie at residues 591 to 617 (CSQC…FPEC), 628 to 657 (CPRP…FPVC), and 670 to 696 (CPQC…NPEC).

This sequence belongs to the type IA topoisomerase family. In terms of assembly, monomer. Requires Mg(2+) as cofactor.

It catalyses the reaction ATP-independent breakage of single-stranded DNA, followed by passage and rejoining.. Functionally, releases the supercoiling and torsional tension of DNA, which is introduced during the DNA replication and transcription, by transiently cleaving and rejoining one strand of the DNA duplex. Introduces a single-strand break via transesterification at a target site in duplex DNA. The scissile phosphodiester is attacked by the catalytic tyrosine of the enzyme, resulting in the formation of a DNA-(5'-phosphotyrosyl)-enzyme intermediate and the expulsion of a 3'-OH DNA strand. The free DNA strand then undergoes passage around the unbroken strand, thus removing DNA supercoils. Finally, in the religation step, the DNA 3'-OH attacks the covalent intermediate to expel the active-site tyrosine and restore the DNA phosphodiester backbone. This Treponema pallidum (strain Nichols) protein is DNA topoisomerase 1.